Here is a 130-residue protein sequence, read N- to C-terminus: Large ribosomal subunit protein bL12 (130 aa).

This sequence belongs to the bacterial ribosomal protein bL12 family. As to quaternary structure, homodimer. Part of the ribosomal stalk of the 50S ribosomal subunit. Forms a multimeric L10(L12)X complex, where L10 forms an elongated spine to which 2 to 4 L12 dimers bind in a sequential fashion. Binds GTP-bound translation factors.

Functionally, forms part of the ribosomal stalk which helps the ribosome interact with GTP-bound translation factors. Is thus essential for accurate translation. The protein is Large ribosomal subunit protein bL12 of Cutibacterium acnes (strain DSM 16379 / KPA171202) (Propionibacterium acnes).